Reading from the N-terminus, the 338-residue chain is Nucleoid-associated protein PA14_59050 (338 aa).

It belongs to the YejK family.

Its subcellular location is the cytoplasm. It is found in the nucleoid. The sequence is that of Nucleoid-associated protein PA14_59050 from Pseudomonas aeruginosa (strain UCBPP-PA14).